Reading from the N-terminus, the 156-residue chain is RNA polymerase sigma factor SigS (156 aa).

Positions 29 to 44 (EYYQLLLIKMWQLSQI) match the Polymerase core binding motif. A DNA-binding region (H-T-H motif) is located at residues 126-145 (QYEIADIMSLSTSTIKLIKA).

This sequence belongs to the sigma-70 factor family.

Sigma factors are initiation factors that promote the attachment of RNA polymerase to specific initiation sites and are then released. Sigma-S contributes to the protection against external stress, thus playing a role in cellular fitness and survival. The chain is RNA polymerase sigma factor SigS (sigS) from Staphylococcus aureus (strain MRSA252).